We begin with the raw amino-acid sequence, 485 residues long: Aspartyl protease family protein 2 (485 aa).

Positions 1–23 (MVGRRKALLFSLCFFFLSLPSFS) are cleaved as a signal peptide. The segment at 43-71 (PVSFQPDSDSESLLESEFESGSDSESSSS) is disordered. Positions 50–64 (SDSESLLESEFESGS) are enriched in acidic residues. Residues 142 to 480 (YFTRLGVGTP…DLASSRVGFA (339 aa)) form the Peptidase A1 domain. Active-site residues include D160 and D365.

It belongs to the peptidase A1 family.

In terms of biological role, aspartyl protease. Not able to cleave BAG6. This is Aspartyl protease family protein 2 from Arabidopsis thaliana (Mouse-ear cress).